Here is a 248-residue protein sequence, read N- to C-terminus: Triosephosphate isomerase (248 aa).

Substrate-binding residues include Asn11 and Lys13. The active-site Electrophile is the His95. Glu165 serves as the catalytic Proton acceptor.

It belongs to the triosephosphate isomerase family. Homodimer.

It localises to the cytoplasm. It catalyses the reaction dihydroxyacetone phosphate = methylglyoxal + phosphate. It carries out the reaction D-glyceraldehyde 3-phosphate = dihydroxyacetone phosphate. It functions in the pathway carbohydrate degradation; glycolysis; D-glyceraldehyde 3-phosphate from glycerone phosphate: step 1/1. The protein operates within carbohydrate biosynthesis; gluconeogenesis. Its function is as follows. Triosephosphate isomerase is an extremely efficient metabolic enzyme that catalyzes the interconversion between dihydroxyacetone phosphate (DHAP) and D-glyceraldehyde-3-phosphate (G3P) in glycolysis and gluconeogenesis. It is also responsible for the non-negligible production of methylglyoxal a reactive cytotoxic side-product that modifies and can alter proteins, DNA and lipids. In Xenopus tropicalis (Western clawed frog), this protein is Triosephosphate isomerase (tpi1).